The chain runs to 459 residues: N-chimaerin (459 aa).

A2 bears the N-acetylalanine mark. The region spanning 49–135 (EFHGMISREA…IETKAAEYIA (87 aa)) is the SH2 domain. T192 is modified (phosphothreonine). The Phorbol-ester/DAG-type zinc finger occupies 205–255 (IHNFKVHTFRGPHWCEYCANFMWGLIAQGVKCADCGLNVHKQCSKMVPNDC). One can recognise a Rho-GAP domain in the interval 268–459 (CDLTTLVKAH…LLIKNEDILF (192 aa)). Position 340 is a phosphothreonine (T340).

In terms of assembly, interacts with EPHA4; effector of EPHA4 in axon guidance linking EPHA4 activation to RAC1 regulation. Phosphorylated. Phosphorylation is EPHA4 kinase activity-dependent. In neurons in brain regions that are involved in learning and memory processes.

Functionally, GTPase-activating protein for p21-rac and a phorbol ester receptor. Involved in the assembly of neuronal locomotor circuits as a direct effector of EPHA4 in axon guidance. In Homo sapiens (Human), this protein is N-chimaerin (CHN1).